The primary structure comprises 554 residues: Cytochrome c oxidase subunit 1-alpha (554 aa).

Residues 26-56 (KDIGVLYLFTAGLAGLISVTLTVYMRMELQH) form a helical membrane-spanning segment. An intrachain disulfide couples Cys63 to Cys77. The next 6 helical transmembrane spans lie at 81–118 (AHLW…LHIG), 127–148 (LNNL…SLLS), 175–203 (AMDL…TFLN), 215–248 (PLFA…DRNF), 260–295 (DPVL…STFA), and 301–319 (GYLP…GFIV). Residue His91 coordinates Fe(II)-heme a. The Cu cation site is built by His273 and Tyr277. Positions 273–277 (HPEVY) form a cross-link, 1'-histidyl-3'-tyrosine (His-Tyr). Cu cation is bound by residues His322 and His323. Transmembrane regions (helical) follow at residues 331 to 359 (LTQQ…IATM), 367 to 390 (KTPM…VIAQ), 399 to 425 (DTYY…GTYY), 436 to 463 (PEWA…FLGR), and 478 to 508 (SYWN…TLFA). His406 provides a ligand contact to heme a3. His408 serves as a coordination point for Fe(II)-heme a.

It belongs to the heme-copper respiratory oxidase family. The cofactor is Cu(2+). It depends on heme as a cofactor.

It is found in the cell inner membrane. It catalyses the reaction 4 Fe(II)-[cytochrome c] + O2 + 8 H(+)(in) = 4 Fe(III)-[cytochrome c] + 2 H2O + 4 H(+)(out). It functions in the pathway energy metabolism; oxidative phosphorylation. Its function is as follows. Subunit I and II form the functional core of the enzyme complex. Electrons originating in cytochrome c are transferred via heme a and Cu(A) to the binuclear center formed by heme a3 and Cu(B). This cytochrome c oxidase shows proton pump activity across the membrane in addition to the electron transfer. In Paracoccus denitrificans, this protein is Cytochrome c oxidase subunit 1-alpha (ctaDI).